A 638-amino-acid polypeptide reads, in one-letter code: Glucans biosynthesis glucosyltransferase H (638 aa).

6 helical membrane-spanning segments follow: residues 60–82, 97–119, 415–437, 464–486, 499–521, and 578–600; these read FYLI…AVMW, FMFL…FCVV, IGHY…IPLV, LWIF…FALL, LRVL…VVMY, and LAMW…ALTS.

The protein belongs to the glycosyltransferase 2 family. OpgH subfamily.

It localises to the cell inner membrane. The protein operates within glycan metabolism; osmoregulated periplasmic glucan (OPG) biosynthesis. Its function is as follows. Involved in the biosynthesis of osmoregulated periplasmic glucans (OPGs). In Xylella fastidiosa (strain 9a5c), this protein is Glucans biosynthesis glucosyltransferase H.